Here is a 151-residue protein sequence, read N- to C-terminus: Deoxyuridine 5'-triphosphate nucleotidohydrolase (151 aa).

Substrate is bound by residues 70-72 (RSG), Asn83, 87-89 (LID), and Met97.

It belongs to the dUTPase family. It depends on Mg(2+) as a cofactor.

It catalyses the reaction dUTP + H2O = dUMP + diphosphate + H(+). It functions in the pathway pyrimidine metabolism; dUMP biosynthesis; dUMP from dCTP (dUTP route): step 2/2. Functionally, this enzyme is involved in nucleotide metabolism: it produces dUMP, the immediate precursor of thymidine nucleotides and it decreases the intracellular concentration of dUTP so that uracil cannot be incorporated into DNA. In Shigella sonnei (strain Ss046), this protein is Deoxyuridine 5'-triphosphate nucleotidohydrolase.